Reading from the N-terminus, the 263-residue chain is MIEKVDYEKVTGLVNSTESFGSVDGPGIRFVVFMQGCQMRCQYCHNPDTWAMKNDRATERTAGDVFKEALRFKDFWGDTGGITVSGGEATLQMDFLIALFSLAKEKGIHTTLDTCALTFRNTPKYLEKYEKLMAVTDLVLLDIKEINPDQHKIVTGHSNKTILACARYLSDIGKPVWIRHVLVPGLTDRDEDLIKLGEYVKTLKNVQRFEILPYHTMGEFKWRELGIPYPLEGVKPPTPDRVRNAKKLMHTETYEEYKKRINH.

The 238-residue stretch at 23–260 (VDGPGIRFVV…TETYEEYKKR (238 aa)) folds into the Radical SAM core domain. [4Fe-4S] cluster-binding residues include C37, C41, and C44. Residues 43-45 (YCH), G87, 142-144 (DIK), and H215 contribute to the S-adenosyl-L-methionine site.

It belongs to the organic radical-activating enzymes family. [4Fe-4S] cluster is required as a cofactor.

It is found in the cytoplasm. The catalysed reaction is glycyl-[formate C-acetyltransferase] + reduced [flavodoxin] + S-adenosyl-L-methionine = glycin-2-yl radical-[formate C-acetyltransferase] + semiquinone [flavodoxin] + 5'-deoxyadenosine + L-methionine + H(+). Its function is as follows. Activation of pyruvate formate-lyase under anaerobic conditions by generation of an organic free radical, using S-adenosylmethionine and reduced flavodoxin as cosubstrates to produce 5'-deoxy-adenosine. The polypeptide is Pyruvate formate-lyase-activating enzyme (act) (Streptococcus mutans serotype c (strain ATCC 700610 / UA159)).